A 309-amino-acid polypeptide reads, in one-letter code: Sporulation sigma-E factor-processing peptidase (309 aa).

Helical transmembrane passes span 7–27, 36–55, 61–78, 88–105, and 130–147; these read VIWLLNFCFDALLLLLTAFIL, LVGGAFIGSSIVLLMFTPFS, PAGKLAFSVVIVVVTFGF, LFSFYFATFLMGGGIIGA, and PISWLFIVGGFPALWFFS. Residue D183 is part of the active site.

It belongs to the peptidase U4 family. Self-associates. Interacts with SigE. Interacts with SpoIIR.

The protein localises to the cell membrane. In terms of biological role, probable aspartic protease that is responsible for the proteolytic cleavage of the RNA polymerase sigma E factor (SigE/spoIIGB) to yield the active peptide in the mother cell during sporulation. Responds to a signal from the forespore that is triggered by the extracellular signal protein SpoIIR. In Bacillus subtilis (strain 168), this protein is Sporulation sigma-E factor-processing peptidase (spoIIGA).